We begin with the raw amino-acid sequence, 427 residues long: Peptidase B (427 aa).

Mn(2+) contacts are provided by Lys-195 and Asp-200. Residue Lys-207 is part of the active site. Mn(2+) is bound by residues Asp-218, Asp-277, and Glu-279. The active site involves Arg-281.

This sequence belongs to the peptidase M17 family. As to quaternary structure, homohexamer. The cofactor is Mn(2+).

It is found in the cytoplasm. The catalysed reaction is Release of an N-terminal amino acid, Xaa, from a peptide or arylamide. Xaa is preferably Glu or Asp but may be other amino acids, including Leu, Met, His, Cys and Gln.. Probably plays an important role in intracellular peptide degradation. The sequence is that of Peptidase B from Shigella flexneri.